We begin with the raw amino-acid sequence, 362 residues long: Chorismate synthase (362 aa).

Position 47 (arginine 47) interacts with NADP(+). FMN-binding positions include 124–126 (RAS), glycine 286, 301–305 (KPTAT), and arginine 327.

The protein belongs to the chorismate synthase family. In terms of assembly, homotetramer. The cofactor is FMNH2.

The catalysed reaction is 5-O-(1-carboxyvinyl)-3-phosphoshikimate = chorismate + phosphate. The protein operates within metabolic intermediate biosynthesis; chorismate biosynthesis; chorismate from D-erythrose 4-phosphate and phosphoenolpyruvate: step 7/7. Its function is as follows. Catalyzes the anti-1,4-elimination of the C-3 phosphate and the C-6 proR hydrogen from 5-enolpyruvylshikimate-3-phosphate (EPSP) to yield chorismate, which is the branch point compound that serves as the starting substrate for the three terminal pathways of aromatic amino acid biosynthesis. This reaction introduces a second double bond into the aromatic ring system. In Prochlorococcus marinus (strain MIT 9303), this protein is Chorismate synthase.